Reading from the N-terminus, the 1173-residue chain is Ubiquitin conjugation factor E4 B (1173 aa).

The residue at position 1 (Met1) is an N-acetylmethionine. The segment at 1-155 is disordered; the sequence is MEELSADEIR…EPSSGPEVSE (155 aa). Over residues 16 to 33 the composition is skewed to low complexity; it reads RLAGGQTSQPTTPLTSPQ. Residues Ser23 and Ser31 each carry the phosphoserine modification. Over residues 51–64 the composition is skewed to polar residues; the sequence is QSLGLNVHNMTPAT. Residues 76 to 99 are compositionally biased toward low complexity; sequence SQSSEGVSSLSSSPSNSLETQSQS. A phosphoserine mark is found at Ser84, Ser88, Ser90, Ser101, Ser103, Ser105, and Ser124. Residues 134–147 are compositionally biased toward basic and acidic residues; it reads NDRREKRSLSDKEP. Phosphoserine occurs at positions 238, 674, and 840. Residues 928–948 are disordered; it reads NKEQWDQLPRDQQQARQSQLA. Residues 937-948 show a composition bias toward low complexity; that stretch reads RDQQQARQSQLA. The U-box domain occupies 1098 to 1171; sequence DAPDEFRDPL…QAWMREKQSS (74 aa). A Phosphoserine modification is found at Ser1136.

It belongs to the ubiquitin conjugation factor E4 family. Interacts with VCP. Interacts with STUB1/CHIP and UNC45B. Proteolytically cleaved by caspases during apoptosis. Cleaved efficiently at Asp-123 by caspase-6 and granzyme B. Cleaved with approximately 10-fold less efficiency at Asp-109 by caspase-3 and caspase-7. In terms of tissue distribution, expressed predominantly in neuronal tissues. Also detected in liver, heart, brain, kidney and testis.

It localises to the cytoplasm. Its subcellular location is the nucleus. The enzyme catalyses S-ubiquitinyl-[E2 ubiquitin-conjugating enzyme]-L-cysteine + [acceptor protein]-L-lysine = [E2 ubiquitin-conjugating enzyme]-L-cysteine + N(6)-ubiquitinyl-[acceptor protein]-L-lysine.. The protein operates within protein modification; protein ubiquitination. Functionally, ubiquitin-protein ligase that probably functions as an E3 ligase in conjunction with specific E1 and E2 ligases. May also function as an E4 ligase mediating the assembly of polyubiquitin chains on substrates ubiquitinated by another E3 ubiquitin ligase. May regulate myosin assembly in striated muscles together with STUB1 and VCP/p97 by targeting myosin chaperone UNC45B for proteasomal degradation. This is Ubiquitin conjugation factor E4 B from Mus musculus (Mouse).